Consider the following 293-residue polypeptide: Protease HtpX (293 aa).

The next 2 membrane-spanning stretches (helical) occupy residues 4–24 and 32–52; these read IALF…VLSL and VTGL…VSLL. Histidine 139 is a Zn(2+) binding site. Residue glutamate 140 is part of the active site. Position 143 (histidine 143) interacts with Zn(2+). Helical transmembrane passes span 158–178 and 193–213; these read VVNT…AGFL and LIYF…ASII. Glutamate 222 contacts Zn(2+).

This sequence belongs to the peptidase M48B family. Zn(2+) serves as cofactor.

Its subcellular location is the cell inner membrane. The sequence is that of Protease HtpX from Cronobacter sakazakii (strain ATCC BAA-894) (Enterobacter sakazakii).